The sequence spans 485 residues: Glutamyl-tRNA(Gln) amidotransferase subunit A (485 aa).

Residues Lys-79 and Ser-154 each act as charge relay system in the active site. Catalysis depends on Ser-178, which acts as the Acyl-ester intermediate.

This sequence belongs to the amidase family. GatA subfamily. As to quaternary structure, heterotrimer of A, B and C subunits.

It carries out the reaction L-glutamyl-tRNA(Gln) + L-glutamine + ATP + H2O = L-glutaminyl-tRNA(Gln) + L-glutamate + ADP + phosphate + H(+). Functionally, allows the formation of correctly charged Gln-tRNA(Gln) through the transamidation of misacylated Glu-tRNA(Gln) in organisms which lack glutaminyl-tRNA synthetase. The reaction takes place in the presence of glutamine and ATP through an activated gamma-phospho-Glu-tRNA(Gln). The protein is Glutamyl-tRNA(Gln) amidotransferase subunit A of Carboxydothermus hydrogenoformans (strain ATCC BAA-161 / DSM 6008 / Z-2901).